The sequence spans 215 residues: NAD(P)H-hydrate epimerase (215 aa).

One can recognise a YjeF N-terminal domain in the interval 10–211 (AQRYDAHATN…DIGIYAQDRV (202 aa)). (6S)-NADPHX is bound at residue 58–62 (NNGGD). K(+) contacts are provided by N59 and D121. (6S)-NADPHX is bound by residues 125-131 (GVGLTRD) and D154. K(+) is bound at residue S157.

Belongs to the NnrE/AIBP family. The cofactor is K(+).

The catalysed reaction is (6R)-NADHX = (6S)-NADHX. The enzyme catalyses (6R)-NADPHX = (6S)-NADPHX. In terms of biological role, catalyzes the epimerization of the S- and R-forms of NAD(P)HX, a damaged form of NAD(P)H that is a result of enzymatic or heat-dependent hydration. This is a prerequisite for the S-specific NAD(P)H-hydrate dehydratase to allow the repair of both epimers of NAD(P)HX. The chain is NAD(P)H-hydrate epimerase from Levilactobacillus brevis (strain ATCC 367 / BCRC 12310 / CIP 105137 / JCM 1170 / LMG 11437 / NCIMB 947 / NCTC 947) (Lactobacillus brevis).